Here is a 333-residue protein sequence, read N- to C-terminus: DNA-directed RNA polymerase subunit alpha (333 aa).

The alpha N-terminal domain (alpha-NTD) stretch occupies residues 1 to 233; sequence MVREKIRVST…DLFIPFLHAE (233 aa). The segment at 269 to 333 is alpha C-terminal domain (alpha-CTD); that stretch reads IALKYIFIDQ…DILEMEKNFA (65 aa).

Belongs to the RNA polymerase alpha chain family. In plastids the minimal PEP RNA polymerase catalytic core is composed of four subunits: alpha, beta, beta', and beta''. When a (nuclear-encoded) sigma factor is associated with the core the holoenzyme is formed, which can initiate transcription.

It localises to the plastid. Its subcellular location is the chloroplast. It catalyses the reaction RNA(n) + a ribonucleoside 5'-triphosphate = RNA(n+1) + diphosphate. DNA-dependent RNA polymerase catalyzes the transcription of DNA into RNA using the four ribonucleoside triphosphates as substrates. The polypeptide is DNA-directed RNA polymerase subunit alpha (Cucumis sativus (Cucumber)).